The sequence spans 29 residues: Cycloviolacin-O22 (29 aa).

A cross-link (cyclopeptide (Gly-Asn)) is located at residues 1-29 (GLPICGETCVGGTCNTPGCTCSWPVCTRN). Disulfide bonds link C5–C19, C9–C21, and C14–C26.

In terms of processing, this is a cyclic peptide. In terms of tissue distribution, expressed in roots and runners but not in leaves, petals and petioles (at protein level).

Functionally, probably participates in a plant defense mechanism. The protein is Cycloviolacin-O22 of Viola odorata (Sweet violet).